We begin with the raw amino-acid sequence, 676 residues long: Forkhead box protein biniou (676 aa).

5 disordered regions span residues 22–50 (YHDP…GHPY), 131–160 (AHSA…SSST), 203–232 (QEQA…SRIS), 249–312 (NYSS…PEKP), and 583–651 (IQHA…AYLP). Positions 34–48 (PHAHSHPHQHTHTGH) are enriched in basic residues. Polar residues predominate over residues 133-160 (SAGSASPQSNSKTPTDLPQDLQYASSST). The span at 203–220 (QEQAGQQQPQQLPAQQLQ) shows a compositional bias: low complexity. Over residues 257-273 (PAKSLNGSESSPPSQNH) the composition is skewed to polar residues. The fork-head DNA-binding region spans 311-408 (KPALSYINMI…DEGSLRRRPR (98 aa)). Over residues 583 to 593 (IQHAQAQAQAQ) the composition is skewed to low complexity. Basic residues predominate over residues 594–611 (AHHHHHQHHASHPSHSHQ). Residues 612–625 (GHGSMHQNHGTSST) are compositionally biased toward low complexity. The segment covering 637–647 (GIDHSPIDRKP) has biased composition (basic and acidic residues).

Binds to DNA. In terms of tissue distribution, in embryo, expressed in all types of visceral muscles and their progenitors (at protein level). In late stage 10 embryo, expressed in the caudal visceral mesoderm and trunk and hindgut visceral mesoderm progenitors.

The protein localises to the nucleus. Component of a regulatory network controlling visceral mesoderm development and midgut morphogenesis. Transcriptional regulator involved in the activation of a large number of genes in the visceral mesoderm including betaTub60D, dpp and Hand. Binds to and regulates a number of enhancers driving expression in the visceral mesoderm in a temporally and spatially restricted manner. Also to binds to enhancers cooperatively with activators, such as bap or HLH54F, to coregulate expression of shared target genes in the visceral mesoderm. Binds to the Ndg enhancer and drives expression of Ndg in the late visceral musculature. May be involved in the transcriptional regulation of wupA in the visceral mesoderm. Plays an indirect role in the later stages of salivary gland positioning. The chain is Forkhead box protein biniou (bin) from Drosophila melanogaster (Fruit fly).